We begin with the raw amino-acid sequence, 171 residues long: Translation initiation factor IF-3 (171 aa).

This sequence belongs to the IF-3 family. In terms of assembly, monomer.

Its subcellular location is the cytoplasm. IF-3 binds to the 30S ribosomal subunit and shifts the equilibrium between 70S ribosomes and their 50S and 30S subunits in favor of the free subunits, thus enhancing the availability of 30S subunits on which protein synthesis initiation begins. The chain is Translation initiation factor IF-3 from Listeria innocua serovar 6a (strain ATCC BAA-680 / CLIP 11262).